The following is a 102-amino-acid chain: Putative ribosomal protein uL13-like (102 aa).

This sequence belongs to the universal ribosomal protein uL13 family.

This chain is Putative ribosomal protein uL13-like (RPL13AP3), found in Homo sapiens (Human).